Consider the following 537-residue polypeptide: CTP synthase (537 aa).

Positions 1 to 268 are amidoligase domain; that stretch reads MNTKYIFVTG…DNLVCKKLKL (268 aa). S14 is a binding site for CTP. S14 contributes to the UTP binding site. 15-20 provides a ligand contact to ATP; the sequence is SLGKGI. An L-glutamine-binding site is contributed by Y55. D72 contributes to the ATP binding site. The Mg(2+) site is built by D72 and E142. Residues 149–151, 189–194, and K225 contribute to the CTP site; these read DIE and KTKPTQ. UTP contacts are provided by residues 189 to 194 and K225; that span reads KTKPTQ. The 243-residue stretch at 293-535 folds into the Glutamine amidotransferase type-1 domain; that stretch reads NIALVGKYVE…IKASLNSKHK (243 aa). L-glutamine is bound at residue G355. The active-site Nucleophile; for glutamine hydrolysis is C382. Residues 383–386, E406, and R463 each bind L-glutamine; that span reads LGMQ. Residues H508 and E510 contribute to the active site.

The protein belongs to the CTP synthase family. In terms of assembly, homotetramer.

It catalyses the reaction UTP + L-glutamine + ATP + H2O = CTP + L-glutamate + ADP + phosphate + 2 H(+). The enzyme catalyses L-glutamine + H2O = L-glutamate + NH4(+). The catalysed reaction is UTP + NH4(+) + ATP = CTP + ADP + phosphate + 2 H(+). It functions in the pathway pyrimidine metabolism; CTP biosynthesis via de novo pathway; CTP from UDP: step 2/2. With respect to regulation, allosterically activated by GTP, when glutamine is the substrate; GTP has no effect on the reaction when ammonia is the substrate. The allosteric effector GTP functions by stabilizing the protein conformation that binds the tetrahedral intermediate(s) formed during glutamine hydrolysis. Inhibited by the product CTP, via allosteric rather than competitive inhibition. Catalyzes the ATP-dependent amination of UTP to CTP with either L-glutamine or ammonia as the source of nitrogen. Regulates intracellular CTP levels through interactions with the four ribonucleotide triphosphates. In Clostridium kluyveri (strain ATCC 8527 / DSM 555 / NBRC 12016 / NCIMB 10680 / K1), this protein is CTP synthase.